The following is a 403-amino-acid chain: S-adenosylmethionine synthase (403 aa).

His22 provides a ligand contact to ATP. Asp24 lines the Mg(2+) pocket. K(+) is bound at residue Glu50. 2 residues coordinate L-methionine: Glu63 and Gln107. A flexible loop region spans residues 107–117; sequence QSPDIAMGVDK. ATP contacts are provided by residues 182-184, 248-249, Asp257, 263-264, Ala280, and Lys284; these read DAK, RF, and RK. L-methionine is bound at residue Asp257. Lys288 serves as a coordination point for L-methionine.

The protein belongs to the AdoMet synthase family. Homotetramer; dimer of dimers. Requires Mg(2+) as cofactor. It depends on K(+) as a cofactor.

It localises to the cytoplasm. The enzyme catalyses L-methionine + ATP + H2O = S-adenosyl-L-methionine + phosphate + diphosphate. Its pathway is amino-acid biosynthesis; S-adenosyl-L-methionine biosynthesis; S-adenosyl-L-methionine from L-methionine: step 1/1. Functionally, catalyzes the formation of S-adenosylmethionine (AdoMet) from methionine and ATP. The overall synthetic reaction is composed of two sequential steps, AdoMet formation and the subsequent tripolyphosphate hydrolysis which occurs prior to release of AdoMet from the enzyme. The protein is S-adenosylmethionine synthase of Chloroflexus aurantiacus (strain ATCC 29366 / DSM 635 / J-10-fl).